Consider the following 291-residue polypeptide: 5'-3' exonuclease (291 aa).

Positions 176–269 constitute a 5'-3' exonuclease domain; the sequence is TPKQVIEYKG…VHAALKPIDK (94 aa).

In terms of biological role, 5'-3' exonuclease acting preferentially on double-stranded DNA. The sequence is that of 5'-3' exonuclease (polA) from Mycoplasma pneumoniae (strain ATCC 29342 / M129 / Subtype 1) (Mycoplasmoides pneumoniae).